The primary structure comprises 424 residues: Gamma-glutamyl phosphate reductase (424 aa).

Belongs to the gamma-glutamyl phosphate reductase family.

The protein localises to the cytoplasm. The catalysed reaction is L-glutamate 5-semialdehyde + phosphate + NADP(+) = L-glutamyl 5-phosphate + NADPH + H(+). The protein operates within amino-acid biosynthesis; L-proline biosynthesis; L-glutamate 5-semialdehyde from L-glutamate: step 2/2. Catalyzes the NADPH-dependent reduction of L-glutamate 5-phosphate into L-glutamate 5-semialdehyde and phosphate. The product spontaneously undergoes cyclization to form 1-pyrroline-5-carboxylate. This Halorhodospira halophila (strain DSM 244 / SL1) (Ectothiorhodospira halophila (strain DSM 244 / SL1)) protein is Gamma-glutamyl phosphate reductase.